The primary structure comprises 174 residues: MKDLTMLLDELKDMSFFNKGDICLIGCSTSEVIGEKIGTVGSMEVAETIFNALDVVSKETGVTFAFQGCEHINRAITIEKSQFNPLTMEEVSVVPDVHAGGSLATYAFQHMKDPIVVEHITVPCGIDIGQTLIGMHIKHVCVPVRTSVKQVGQAIVTIATSRPKKIGGERAKYQ.

Belongs to the UPF0340 family.

In Staphylococcus aureus (strain bovine RF122 / ET3-1), this protein is UPF0340 protein SAB1998c.